Consider the following 164-residue polypeptide: Ecotin (164 aa).

The N-terminal stretch at 1–20 is a signal peptide; sequence MKMFVPAVVFAALASASAWA. Cysteines 72 and 109 form a disulfide.

It belongs to the protease inhibitor I11 (ecotin) family. Homodimer.

Its subcellular location is the periplasm. General inhibitor of pancreatic serine proteases: inhibits chymotrypsin, trypsin, elastases, factor X, kallikrein as well as a variety of other proteases. The protein is Ecotin of Salmonella typhi.